Consider the following 315-residue polypeptide: DNA-directed RNA polymerase subunit alpha (315 aa).

The interval 1 to 228 is alpha N-terminal domain (alpha-NTD); the sequence is MLEIEKPKIE…EHFKLFMTLT (228 aa). Residues 245 to 315 form an alpha C-terminal domain (alpha-CTD) region; it reads KEKVLEMTIE…LGLGLKKSDE (71 aa).

This sequence belongs to the RNA polymerase alpha chain family. As to quaternary structure, homodimer. The RNAP catalytic core consists of 2 alpha, 1 beta, 1 beta' and 1 omega subunit. When a sigma factor is associated with the core the holoenzyme is formed, which can initiate transcription.

It catalyses the reaction RNA(n) + a ribonucleoside 5'-triphosphate = RNA(n+1) + diphosphate. Its function is as follows. DNA-dependent RNA polymerase catalyzes the transcription of DNA into RNA using the four ribonucleoside triphosphates as substrates. The sequence is that of DNA-directed RNA polymerase subunit alpha from Clostridium novyi (strain NT).